Consider the following 305-residue polypeptide: UDP-3-O-acyl-N-acetylglucosamine deacetylase (305 aa).

Residues H79, H238, and D242 each coordinate Zn(2+). The active-site Proton donor is the H265.

This sequence belongs to the LpxC family. Zn(2+) is required as a cofactor.

The enzyme catalyses a UDP-3-O-[(3R)-3-hydroxyacyl]-N-acetyl-alpha-D-glucosamine + H2O = a UDP-3-O-[(3R)-3-hydroxyacyl]-alpha-D-glucosamine + acetate. Its pathway is glycolipid biosynthesis; lipid IV(A) biosynthesis; lipid IV(A) from (3R)-3-hydroxytetradecanoyl-[acyl-carrier-protein] and UDP-N-acetyl-alpha-D-glucosamine: step 2/6. Its function is as follows. Catalyzes the hydrolysis of UDP-3-O-myristoyl-N-acetylglucosamine to form UDP-3-O-myristoylglucosamine and acetate, the committed step in lipid A biosynthesis. This chain is UDP-3-O-acyl-N-acetylglucosamine deacetylase, found in Klebsiella pneumoniae (strain 342).